Consider the following 511-residue polypeptide: Lysine--tRNA ligase (511 aa).

The tract at residues 1–20 (MQKNTSQPTNTNEQSNQPSL) is disordered. Mg(2+) contacts are provided by Glu-422 and Glu-429.

It belongs to the class-II aminoacyl-tRNA synthetase family. As to quaternary structure, homodimer. The cofactor is Mg(2+).

The protein resides in the cytoplasm. The enzyme catalyses tRNA(Lys) + L-lysine + ATP = L-lysyl-tRNA(Lys) + AMP + diphosphate. The polypeptide is Lysine--tRNA ligase (Chlorobium chlorochromatii (strain CaD3)).